A 1358-amino-acid polypeptide reads, in one-letter code: Regulatory protein SIR4 (1358 aa).

Residues 1–15 (MPNDNKTPNRSSTPK) are compositionally biased toward polar residues. Disordered regions lie at residues 1–98 (MPND…PHSN), 252–277 (SLSVPKVSAGDSGISPEESKARSPGI), 356–466 (HDEK…PPEI), 498–544 (VQGE…ISNG), 677–726 (ASTE…EDEQ), 752–787 (VSDSDDSSSDNDSLTDLESLSSGESNEIKVTNDLDT), and 913–970 (HSQE…ENLS). Residues 26–39 (KIPEREEKSNEVKT) show a composition bias toward basic and acidic residues. Polar residues-rich tracts occupy residues 49 to 66 (KSKNYSRPSTAIHTSPHQ) and 75 to 96 (HKQLQQPKSSPLKKNNYNSFPH). The segment covering 373-388 (QKMKEDADLKRMEILK) has biased composition (basic and acidic residues). The span at 428–437 (QENNYNSTSR) shows a compositional bias: polar residues. Positions 452–464 (KNGENKKIGKRPP) are enriched in basic and acidic residues. Polar residues predominate over residues 507–517 (RNNTLNVTPSK). A Phosphoserine modification is found at Ser-692. The segment covering 706–720 (FPVSLSQPSKKSFAN) has biased composition (polar residues). Over residues 754 to 766 (DSDDSSSDNDSLT) the composition is skewed to acidic residues. Basic and acidic residues predominate over residues 777-787 (NEIKVTNDLDT). The segment covering 916-932 (EQNSSSAKPSQIPTVSS) has biased composition (polar residues). Residue Lys-1128 forms a Glycyl lysine isopeptide (Lys-Gly) (interchain with G-Cter in SUMO) linkage. The stretch at 1271 to 1347 (LSFVDIVLSK…DAKINKLMEK (77 aa)) forms a coiled coil.

As to quaternary structure, homodimer. Interacts with MPS3. Interacts with RIS1. Interacts with SIR1, SIR2 and SIR3. Interacts with YKU80. Interacts with UBP10. Interacts with RAP1 (via C-terminus).

It localises to the nucleus. Its function is as follows. The proteins SIR1 through SIR4 are required for transcriptional repression of the silent mating type loci, HML and HMR. The proteins SIR2 through SIR4 repress mulitple loci by modulating chromatin structure. Involves the compaction of chromatin fiber into a more condensed form. In Saccharomyces cerevisiae (strain ATCC 204508 / S288c) (Baker's yeast), this protein is Regulatory protein SIR4 (SIR4).